The chain runs to 325 residues: Biotin synthase (325 aa).

Positions 49 to 267 (TQVQISTLLS…IAAARISMPR (219 aa)) constitute a Radical SAM core domain. [4Fe-4S] cluster-binding residues include Cys-64, Cys-68, and Cys-71. 4 residues coordinate [2Fe-2S] cluster: Cys-108, Cys-139, Cys-199, and Arg-271.

Belongs to the radical SAM superfamily. Biotin synthase family. In terms of assembly, homodimer. The cofactor is [4Fe-4S] cluster. [2Fe-2S] cluster is required as a cofactor.

It catalyses the reaction (4R,5S)-dethiobiotin + (sulfur carrier)-SH + 2 reduced [2Fe-2S]-[ferredoxin] + 2 S-adenosyl-L-methionine = (sulfur carrier)-H + biotin + 2 5'-deoxyadenosine + 2 L-methionine + 2 oxidized [2Fe-2S]-[ferredoxin]. It functions in the pathway cofactor biosynthesis; biotin biosynthesis; biotin from 7,8-diaminononanoate: step 2/2. Its function is as follows. Catalyzes the conversion of dethiobiotin (DTB) to biotin by the insertion of a sulfur atom into dethiobiotin via a radical-based mechanism. The chain is Biotin synthase from Acidiphilium cryptum (strain JF-5).